The chain runs to 159 residues: Phosphopantetheine adenylyltransferase (159 aa).

Thr-10 contributes to the substrate binding site. ATP is bound by residues Thr-10–Phe-11 and His-18. Substrate contacts are provided by Lys-42, Met-74, and Arg-88. Residues Gly-89 to Arg-91, Glu-99, and Trp-124 to Ser-130 contribute to the ATP site.

It belongs to the bacterial CoaD family. In terms of assembly, homohexamer. Mg(2+) serves as cofactor.

The protein resides in the cytoplasm. It carries out the reaction (R)-4'-phosphopantetheine + ATP + H(+) = 3'-dephospho-CoA + diphosphate. Its pathway is cofactor biosynthesis; coenzyme A biosynthesis; CoA from (R)-pantothenate: step 4/5. Reversibly transfers an adenylyl group from ATP to 4'-phosphopantetheine, yielding dephospho-CoA (dPCoA) and pyrophosphate. In Yersinia pseudotuberculosis serotype I (strain IP32953), this protein is Phosphopantetheine adenylyltransferase.